Here is a 287-residue protein sequence, read N- to C-terminus: Putative ankyrin repeat protein R791 (287 aa).

ANK repeat units lie at residues 40–71 (HNFNVLHEVIKRGYVHILKYVDELENLGPLVF), 76–105 (NVHDKLKLACNHDQLPIVKYLVETNSNIET), 107–134 (NDDVIITASFYGRTNIVEYFIKKDIDNK), 135–164 (TIFEALKNACDNGHLETMILLINNGVDIKA), 165–194 (KDNFIIKQAISKGHLNIVKYLVENGATIDI), 196–224 (DDTYIINSAQKGYYKMVEYLVYRGADYRT), and 225–254 (VDDLPIRCALMGGHLDVVKYLQSLGADIEA).

This is Putative ankyrin repeat protein R791 from Acanthamoeba polyphaga (Amoeba).